Reading from the N-terminus, the 86-residue chain is MKLKIKKGATVQVITGSDKGKKGTVIAVDANAMKIQVQGVKVQTHYDKKDGLLKKEGFIDYSNVKLVEAASKEKKTSKKATKSKSA.

Belongs to the universal ribosomal protein uL24 family. In terms of assembly, part of the 50S ribosomal subunit.

Functionally, one of two assembly initiator proteins, it binds directly to the 5'-end of the 23S rRNA, where it nucleates assembly of the 50S subunit. In terms of biological role, one of the proteins that surrounds the polypeptide exit tunnel on the outside of the subunit. This Bdellovibrio bacteriovorus (strain ATCC 15356 / DSM 50701 / NCIMB 9529 / HD100) protein is Large ribosomal subunit protein uL24.